Reading from the N-terminus, the 176-residue chain is Neuroblastoma suppressor of tumorigenicity 1 (176 aa).

The signal sequence occupies residues 1–17; that stretch reads MTVWLLIGFLLPVAIFA. Disulfide bonds link Cys-34/Cys-84, Cys-48/Cys-98, Cys-58/Cys-117, Cys-62/Cys-119, and Cys-81/Cys-122. A CTCK domain is found at 34–123; the sequence is CEAKNITQIV…ILQCSCQACG (90 aa). The tract at residues 148-176 is disordered; that stretch reads ETLGHHHHRPPAREEDSPAQSQREGESEE.

This sequence belongs to the DAN family. Interacts with bmp2; the interaction is blocked in presence of nog.

The protein resides in the secreted. May act as a tumor suppressor. Cytokine that has an axial patterning activity. Acts like bone morpho-genetic protein (BMP) antagonist in embryonic explants. Blocks the bmp2 activity. This chain is Neuroblastoma suppressor of tumorigenicity 1 (nbl1), found in Xenopus tropicalis (Western clawed frog).